Consider the following 117-residue polypeptide: MDKKAARIRRATRARRKLKELGATRLVVHRTPRHIYAQVIAPNGSEILVAASTVEKAINEQLKYAGNKDAAAAVGKAVAERALEKGITKVSFDRSGFQYHGRVQALADAAREAGLQF.

It belongs to the universal ribosomal protein uL18 family. In terms of assembly, part of the 50S ribosomal subunit; part of the 5S rRNA/L5/L18/L25 subcomplex. Contacts the 5S and 23S rRNAs.

This is one of the proteins that bind and probably mediate the attachment of the 5S RNA into the large ribosomal subunit, where it forms part of the central protuberance. In Yersinia enterocolitica serotype O:8 / biotype 1B (strain NCTC 13174 / 8081), this protein is Large ribosomal subunit protein uL18.